A 339-amino-acid chain; its full sequence is Biotin synthase (339 aa).

The Radical SAM core domain maps to 55 to 288; the sequence is LSEGALHSCS…GKIIKFAAGR (234 aa). The [4Fe-4S] cluster site is built by cysteine 73, cysteine 77, and cysteine 80. The [2Fe-2S] cluster site is built by cysteine 152, cysteine 213, and lysine 283.

It belongs to the radical SAM superfamily. Biotin synthase family. Homodimer. Requires [4Fe-4S] cluster as cofactor. It depends on [2Fe-2S] cluster as a cofactor.

It catalyses the reaction (4R,5S)-dethiobiotin + (sulfur carrier)-SH + 2 reduced [2Fe-2S]-[ferredoxin] + 2 S-adenosyl-L-methionine = (sulfur carrier)-H + biotin + 2 5'-deoxyadenosine + 2 L-methionine + 2 oxidized [2Fe-2S]-[ferredoxin]. It participates in cofactor biosynthesis; biotin biosynthesis; biotin from 7,8-diaminononanoate: step 2/2. Functionally, catalyzes the conversion of dethiobiotin (DTB) to biotin by the insertion of a sulfur atom into dethiobiotin via a radical-based mechanism. The protein is Biotin synthase of Chlorobium phaeobacteroides (strain BS1).